The following is a 401-amino-acid chain: LL-diaminopimelate aminotransferase (401 aa).

Residues Tyr15 and Gly42 each coordinate substrate. Residues Tyr72, 108–109 (AK), Tyr132, Asn176, Tyr207, and 235–237 (SFS) contribute to the pyridoxal 5'-phosphate site. The substrate site is built by Lys109, Tyr132, and Asn176. N6-(pyridoxal phosphate)lysine is present on Lys238. 2 residues coordinate pyridoxal 5'-phosphate: Arg246 and Asn281. Substrate-binding residues include Asn281 and Arg377.

It belongs to the class-I pyridoxal-phosphate-dependent aminotransferase family. LL-diaminopimelate aminotransferase subfamily. As to quaternary structure, homodimer. It depends on pyridoxal 5'-phosphate as a cofactor.

The catalysed reaction is (2S,6S)-2,6-diaminopimelate + 2-oxoglutarate = (S)-2,3,4,5-tetrahydrodipicolinate + L-glutamate + H2O + H(+). It participates in amino-acid biosynthesis; L-lysine biosynthesis via DAP pathway; LL-2,6-diaminopimelate from (S)-tetrahydrodipicolinate (aminotransferase route): step 1/1. Functionally, involved in the synthesis of meso-diaminopimelate (m-DAP or DL-DAP), required for both lysine and peptidoglycan biosynthesis. Catalyzes the direct conversion of tetrahydrodipicolinate to LL-diaminopimelate. This is LL-diaminopimelate aminotransferase from Azobacteroides pseudotrichonymphae genomovar. CFP2.